A 249-amino-acid polypeptide reads, in one-letter code: Probable transcriptional regulatory protein A1S_1496 (249 aa).

Belongs to the TACO1 family.

The protein localises to the cytoplasm. This Acinetobacter baumannii (strain ATCC 17978 / DSM 105126 / CIP 53.77 / LMG 1025 / NCDC KC755 / 5377) protein is Probable transcriptional regulatory protein A1S_1496.